The primary structure comprises 166 residues: FMN reductase (NADH) RutF (166 aa).

It belongs to the non-flavoprotein flavin reductase family. RutF subfamily.

The enzyme catalyses FMNH2 + NAD(+) = FMN + NADH + 2 H(+). Functionally, catalyzes the reduction of FMN to FMNH2 which is used to reduce pyrimidine by RutA via the Rut pathway. The polypeptide is FMN reductase (NADH) RutF (Cronobacter sakazakii (strain ATCC BAA-894) (Enterobacter sakazakii)).